The following is a 799-amino-acid chain: Elongation factor G, mitochondrial (799 aa).

Residues 1 to 33 (MRSPSLARLQTRAVFGLTRSARFQPQTLLRQRC) constitute a mitochondrion transit peptide. The region spanning 97–384 (DKCRNIGIAA…GVIDYLPNPA (288 aa)) is the tr-type G domain. Residues 106-113 (AHIDSGKT), 182-186 (DTPGH), and 236-239 (NKMD) contribute to the GTP site.

It belongs to the TRAFAC class translation factor GTPase superfamily. Classic translation factor GTPase family. EF-G/EF-2 subfamily.

The protein resides in the mitochondrion. Its pathway is protein biosynthesis; polypeptide chain elongation. Mitochondrial GTPase that catalyzes the GTP-dependent ribosomal translocation step during translation elongation. During this step, the ribosome changes from the pre-translocational (PRE) to the post-translocational (POST) state as the newly formed A-site-bound peptidyl-tRNA and P-site-bound deacylated tRNA move to the P and E sites, respectively. Catalyzes the coordinated movement of the two tRNA molecules, the mRNA and conformational changes in the ribosome. The chain is Elongation factor G, mitochondrial (mef1) from Penicillium rubens (strain ATCC 28089 / DSM 1075 / NRRL 1951 / Wisconsin 54-1255) (Penicillium chrysogenum).